The primary structure comprises 955 residues: 4-alpha-glucanotransferase DPE2 (955 aa).

The residue at position 1 (methionine 1) is an N-acetylmethionine. CBM20 domains lie at 13 to 122 (KSSK…LWQS) and 157 to 270 (SDQD…PWRG). Residues 925 to 955 (SGRSVPANVSGEDINKSRGEVIANGSTKPNP) are disordered.

This sequence belongs to the disproportionating enzyme family.

The protein resides in the cytoplasm. It localises to the cytosol. The enzyme catalyses Transfers a segment of a (1-&gt;4)-alpha-D-glucan to a new position in an acceptor, which may be glucose or a (1-&gt;4)-alpha-D-glucan.. Its activity is regulated as follows. Inactivated in response to cold stress. Its function is as follows. Cytosolic alpha-glucanotransferase essential for the cytosolic metabolism of maltose, an intermediate on the pathway by which starch is converted to sucrose in leaves at night. Metabolizes maltose exported from the chloroplast and is specific for beta-maltose. May play a role in freezing tolerance. Temperature drop induces inactivation of DPE2 that leads to rapid accumulation of maltose, a solute that protects cells from freezing damage. The sequence is that of 4-alpha-glucanotransferase DPE2 (DPE2) from Arabidopsis thaliana (Mouse-ear cress).